A 125-amino-acid chain; its full sequence is Photoactive yellow protein (125 aa).

Residues 23 to 86 enclose the PAS domain; that stretch reads LNQLAFGAIQ…GRFKEGVANG (64 aa). An S-(4-hydroxycinnamyl)cysteine modification is found at Cys-69.

This sequence belongs to the photoactive yellow protein family. Post-translationally, the 4-hydroxycinnamic acid (p-coumaric acid) chromophore is covalently bound via a thioester linkage.

Photoactive blue light protein. Probably functions as a photoreceptor for a negative phototaxis response. The protein is Photoactive yellow protein (pyp) of Halochromatium salexigens (Chromatium salexigens).